The chain runs to 660 residues: Crossover junction endonuclease MUS81 (660 aa).

The Helix-hairpin-helix motif 1 motif lies at 62 to 81 (KDLYQIKGVGKWVIRQLKGS). Residues 82-98 (FPESSPDLSPPESNAAG) show a composition bias toward low complexity. The disordered stretch occupies residues 82–109 (FPESSPDLSPPESNAAGEKGKKAGGSKR). Residues 411 to 506 (LILDDRENFG…RKLIYLVEGD (96 aa)) enclose the ERCC4 domain. Residues 586–623 (TVSDVFALQLMQVPQVTEEAALAVIGLYPTLFSLAKAY) carry the Helix-hairpin-helix motif 2 motif.

The protein belongs to the XPF family. In terms of assembly, forms a heterodimer with EME1. Interacts with RAD54. Mg(2+) is required as a cofactor. It depends on Ca(2+) as a cofactor. In terms of tissue distribution, low expression in shoots and roots from etiolated seedlings, and panicles after meiosis; moderate expression in young panicles under differentiation of floral organs before and during meiosis; and high expression in mature leaves.

The protein localises to the nucleus. In terms of biological role, interacts with EME1 to form a DNA structure-specific endonuclease with substrate preference for branched DNA structures with a 5'-end at the branch nick. Typical substrates include 3'-flap structures, D-loops, replication forks, nicked Holliday junctions and also intact Holliday junctions with a reduced efficiency. May be required in mitosis for the processing of stalled or collapsed replication fork intermediates. Plays a role in DNA repair and in genotoxic stress-induced homologous recombination (HR) in somatic cells. Mediates a subset of meiotic recombination events that are insensitive to crossover interference. In Oryza sativa subsp. japonica (Rice), this protein is Crossover junction endonuclease MUS81 (MUS81).